The following is a 282-amino-acid chain: Phycocyanobilin lyase subunit beta (282 aa).

The protein belongs to the CpcE/RpcE/PecE family. CpcE and CpcF associate to form a lyase.

Its function is as follows. Required for the chromophorylation of the CpcA gene product. This is Phycocyanobilin lyase subunit beta (cpcF1) from Pseudanabaena tenuis (strain PCC 7409).